The chain runs to 277 residues: Large ribosomal subunit protein uL2 (277 aa).

The disordered stretch occupies residues 222–277 (GSVMNPNDHPHGGGEGKSPVGHPGPLTPWGKPALGLKTRKNKKYSDKFIIKRKNKK).

The protein belongs to the universal ribosomal protein uL2 family. In terms of assembly, part of the 50S ribosomal subunit. Forms a bridge to the 30S subunit in the 70S ribosome.

Its function is as follows. One of the primary rRNA binding proteins. Required for association of the 30S and 50S subunits to form the 70S ribosome, for tRNA binding and peptide bond formation. It has been suggested to have peptidyltransferase activity; this is somewhat controversial. Makes several contacts with the 16S rRNA in the 70S ribosome. The chain is Large ribosomal subunit protein uL2 from Clostridium kluyveri (strain NBRC 12016).